The primary structure comprises 207 residues: Ribosomal RNA large subunit methyltransferase E (207 aa).

5 residues coordinate S-adenosyl-L-methionine: Gly-60, Trp-62, Asp-80, Asp-96, and Asp-121. The Proton acceptor role is filled by Lys-161.

Belongs to the class I-like SAM-binding methyltransferase superfamily. RNA methyltransferase RlmE family.

The protein resides in the cytoplasm. The enzyme catalyses uridine(2552) in 23S rRNA + S-adenosyl-L-methionine = 2'-O-methyluridine(2552) in 23S rRNA + S-adenosyl-L-homocysteine + H(+). Its function is as follows. Specifically methylates the uridine in position 2552 of 23S rRNA at the 2'-O position of the ribose in the fully assembled 50S ribosomal subunit. The chain is Ribosomal RNA large subunit methyltransferase E from Marinobacter nauticus (strain ATCC 700491 / DSM 11845 / VT8) (Marinobacter aquaeolei).